The chain runs to 397 residues: Tryptophan synthase beta chain (397 aa).

Lysine 91 is subject to N6-(pyridoxal phosphate)lysine.

It belongs to the TrpB family. Tetramer of two alpha and two beta chains. It depends on pyridoxal 5'-phosphate as a cofactor.

The enzyme catalyses (1S,2R)-1-C-(indol-3-yl)glycerol 3-phosphate + L-serine = D-glyceraldehyde 3-phosphate + L-tryptophan + H2O. The protein operates within amino-acid biosynthesis; L-tryptophan biosynthesis; L-tryptophan from chorismate: step 5/5. Functionally, the beta subunit is responsible for the synthesis of L-tryptophan from indole and L-serine. This chain is Tryptophan synthase beta chain, found in Bacillus cereus (strain ATCC 14579 / DSM 31 / CCUG 7414 / JCM 2152 / NBRC 15305 / NCIMB 9373 / NCTC 2599 / NRRL B-3711).